A 1106-amino-acid polypeptide reads, in one-letter code: Carbamoyl phosphate synthase large chain (1106 aa).

The carboxyphosphate synthetic domain stretch occupies residues 1–401; sequence MPKRNDLNKV…AFLKALRSLE (401 aa). Arg129, Arg169, Gly175, Gly176, Arg208, Val210, Glu215, Gly241, Val242, His243, Gln284, and Glu298 together coordinate ATP. Positions 133 to 327 constitute an ATP-grasp 1 domain; that stretch reads KTTMNDIGEP…IARVASKIAI (195 aa). Mg(2+) is bound by residues Gln284, Glu298, and Asn300. Residues Gln284, Glu298, and Asn300 each coordinate Mn(2+). Residues 402–577 form an oligomerization domain region; that stretch reads IDLDDLHQSI…YSAYNEENEA (176 aa). Residues 578-964 form a carbamoyl phosphate synthetic domain region; the sequence is IPPSEPTHDK…ALYKAMLASG (387 aa). One can recognise an ATP-grasp 2 domain in the interval 706–896; sequence DQLLNKLGID…MVKIATKAMM (191 aa). ATP-binding residues include Arg742, Gln781, Leu783, Glu787, Gly812, Val813, His814, Ser815, Gln855, and Glu867. Residues Gln855, Glu867, and Asn869 each coordinate Mg(2+). Mn(2+)-binding residues include Gln855, Glu867, and Asn869. The MGS-like domain maps to 965-1106; sequence FSINLNGGVL…LQDYLKELSN (142 aa). The interval 965–1106 is allosteric domain; the sequence is FSINLNGGVL…LQDYLKELSN (142 aa).

This sequence belongs to the CarB family. As to quaternary structure, composed of two chains; the small (or glutamine) chain promotes the hydrolysis of glutamine to ammonia, which is used by the large (or ammonia) chain to synthesize carbamoyl phosphate. Tetramer of heterodimers (alpha,beta)4. It depends on Mg(2+) as a cofactor. Mn(2+) serves as cofactor.

The catalysed reaction is hydrogencarbonate + L-glutamine + 2 ATP + H2O = carbamoyl phosphate + L-glutamate + 2 ADP + phosphate + 2 H(+). It carries out the reaction hydrogencarbonate + NH4(+) + 2 ATP = carbamoyl phosphate + 2 ADP + phosphate + 2 H(+). It participates in amino-acid biosynthesis; L-arginine biosynthesis; carbamoyl phosphate from bicarbonate: step 1/1. It functions in the pathway pyrimidine metabolism; UMP biosynthesis via de novo pathway; (S)-dihydroorotate from bicarbonate: step 1/3. Its function is as follows. Large subunit of the glutamine-dependent carbamoyl phosphate synthetase (CPSase). CPSase catalyzes the formation of carbamoyl phosphate from the ammonia moiety of glutamine, carbonate, and phosphate donated by ATP, constituting the first step of 2 biosynthetic pathways, one leading to arginine and/or urea and the other to pyrimidine nucleotides. The large subunit (synthetase) binds the substrates ammonia (free or transferred from glutamine from the small subunit), hydrogencarbonate and ATP and carries out an ATP-coupled ligase reaction, activating hydrogencarbonate by forming carboxy phosphate which reacts with ammonia to form carbamoyl phosphate. The protein is Carbamoyl phosphate synthase large chain of Natranaerobius thermophilus (strain ATCC BAA-1301 / DSM 18059 / JW/NM-WN-LF).